Consider the following 465-residue polypeptide: Macrophage metalloelastase (465 aa).

The first 21 residues, 1-21, serve as a signal peptide directing secretion; sequence MKFLLVLVLLVSLQVSACGAA. A propeptide spans 22–101 (activation peptide); that stretch reads PMNESEFAEW…DVQHLRAVPQ (80 aa). The Cysteine switch motif lies at 86–93; that stretch reads SRCGVPDV. Cys-88 is a Zn(2+) binding site. Residues Asp-120 and Asp-154 each contribute to the Ca(2+) site. Residues His-164 and Asp-166 each coordinate Zn(2+). Residues Asp-171, Gly-172, Gly-174, and Thr-176 each contribute to the Ca(2+) site. A Zn(2+)-binding site is contributed by His-179. Ca(2+)-binding residues include Gly-186 and Asp-190. His-192 contributes to the Zn(2+) binding site. Ca(2+) is bound by residues Asp-194, Glu-195, and Glu-197. His-214 contacts Zn(2+). Residue Glu-215 is part of the active site. The Zn(2+) site is built by His-218 and His-224. Cys-278 and Cys-465 are disulfide-bonded. 4 Hemopexin repeats span residues 281–324, 325–371, 373–421, and 422–465; these read SLSF…WPTI, PSGI…GFPA, VKKI…FPGI, and RPKI…WFGC. Asp-285 is a binding site for Ca(2+). Asn-313 carries an N-linked (GlcNAc...) asparagine glycan. 2 residues coordinate Ca(2+): Asp-377 and Asp-426.

This sequence belongs to the peptidase M10A family. Requires Ca(2+) as cofactor. The cofactor is Zn(2+).

It localises to the secreted. The protein localises to the extracellular space. The protein resides in the extracellular matrix. It catalyses the reaction Hydrolysis of soluble and insoluble elastin. Specific cleavages are also produced at 14-Ala-|-Leu-15 and 16-Tyr-|-Leu-17 in the B chain of insulin.. Functionally, may be involved in tissue injury and remodeling. Has significant elastolytic activity. Can accept large and small amino acids at the P1' site, but has a preference for leucine. Aromatic or hydrophobic residues are preferred at the P1 site, with small hydrophobic residues (preferably alanine) occupying P3. The chain is Macrophage metalloelastase (Mmp12) from Rattus norvegicus (Rat).